Here is a 710-residue protein sequence, read N- to C-terminus: DNA topoisomerase 1 (710 aa).

Positions 1-22 are disordered; the sequence is MPTSTKSKTKTTTKKKTTRKRV. Positions 7–22 are enriched in basic residues; the sequence is SKTKTTTKKKTTRKRV. The region spanning 26 to 136 is the Toprim domain; it reads KNLVIVESPA…EKNRVVFNEI (111 aa). 2 residues coordinate Mg(2+): Glu-32 and Asp-105. Residues 152 to 574 form the Topo IA-type catalytic domain; it reads DVDLVDAQQA…QFYKPFAKEL (423 aa). Positions 186–191 are interaction with DNA; the sequence is SAGRVQ. Catalysis depends on Tyr-321, which acts as the O-(5'-phospho-DNA)-tyrosine intermediate. C4-type zinc fingers lie at residues 595 to 621 and 635 to 663; these read CDVCGSPMVIKLGRFGKFYACSNFPDC and CPLCHEGNIIERKTKKNRIFYGCDRYPDC. The segment at 676–702 adopts a C4-type 3; atypical zinc-finger fold; sequence CPKSGHFLVEKKVRGGGKQVVCSNDEC.

It belongs to the type IA topoisomerase family. Monomer. The cofactor is Mg(2+).

The catalysed reaction is ATP-independent breakage of single-stranded DNA, followed by passage and rejoining.. In terms of biological role, releases the supercoiling and torsional tension of DNA, which is introduced during the DNA replication and transcription, by transiently cleaving and rejoining one strand of the DNA duplex. Introduces a single-strand break via transesterification at a target site in duplex DNA. The scissile phosphodiester is attacked by the catalytic tyrosine of the enzyme, resulting in the formation of a DNA-(5'-phosphotyrosyl)-enzyme intermediate and the expulsion of a 3'-OH DNA strand. The free DNA strand then undergoes passage around the unbroken strand, thus removing DNA supercoils. Finally, in the religation step, the DNA 3'-OH attacks the covalent intermediate to expel the active-site tyrosine and restore the DNA phosphodiester backbone. The polypeptide is DNA topoisomerase 1 (Lactococcus lactis subsp. lactis (strain IL1403) (Streptococcus lactis)).